A 255-amino-acid polypeptide reads, in one-letter code: tRNA (guanine-N(7)-)-methyltransferase (255 aa).

Positions 1–29 (MSDSDASRPSAIASDGPDAAGKHASGAPW) are disordered. Residues Glu-86, Glu-111, Asp-138, and Asp-160 each coordinate S-adenosyl-L-methionine. Residue Asp-160 is part of the active site. Substrate contacts are provided by residues Lys-164, Asp-196, and 233 to 236 (TRYE).

This sequence belongs to the class I-like SAM-binding methyltransferase superfamily. TrmB family.

It catalyses the reaction guanosine(46) in tRNA + S-adenosyl-L-methionine = N(7)-methylguanosine(46) in tRNA + S-adenosyl-L-homocysteine. It functions in the pathway tRNA modification; N(7)-methylguanine-tRNA biosynthesis. Catalyzes the formation of N(7)-methylguanine at position 46 (m7G46) in tRNA. This Ruegeria sp. (strain TM1040) (Silicibacter sp.) protein is tRNA (guanine-N(7)-)-methyltransferase.